The sequence spans 295 residues: Probable porphobilinogen deaminase (295 aa).

The residue at position 234 (cysteine 234) is an S-(dipyrrolylmethanemethyl)cysteine.

The protein belongs to the HMBS family. It depends on dipyrromethane as a cofactor.

The enzyme catalyses 4 porphobilinogen + H2O = hydroxymethylbilane + 4 NH4(+). It functions in the pathway porphyrin-containing compound metabolism; protoporphyrin-IX biosynthesis; coproporphyrinogen-III from 5-aminolevulinate: step 2/4. In terms of biological role, tetrapolymerization of the monopyrrole PBG into the hydroxymethylbilane pre-uroporphyrinogen in several discrete steps. The polypeptide is Probable porphobilinogen deaminase (hemC) (Thermoplasma acidophilum (strain ATCC 25905 / DSM 1728 / JCM 9062 / NBRC 15155 / AMRC-C165)).